Reading from the N-terminus, the 357-residue chain is 2-oxoglutarate-dependent dioxygenase 11 (357 aa).

The Fe2OG dioxygenase domain occupies 207–307; the sequence is QPRGLRMAYY…RISAALFHYP (101 aa). Fe cation is bound by residues histidine 231, aspartate 233, and histidine 288. Residue arginine 298 participates in 2-oxoglutarate binding.

It belongs to the iron/ascorbate-dependent oxidoreductase family. The cofactor is Fe(2+). L-ascorbate is required as a cofactor. Expressed in shoots.

Its subcellular location is the cytoplasm. The enzyme catalyses melatonin + 2-oxoglutarate + O2 = 2-hydroxymelatonin + succinate + CO2. In terms of biological role, involved in melatonin degradation. Catalyzes the hydroxylation of melatonin to produce 2-hydroxymelatonin. In Oryza sativa subsp. japonica (Rice), this protein is 2-oxoglutarate-dependent dioxygenase 11.